Consider the following 364-residue polypeptide: Nucleosome assembly protein 1;2 (364 aa).

Residues 32 to 86 (VESIKNTLQGLAARHTDVLESLEPKVRKRVEVLREIQSQHDDLEAKFFEERAALE) adopt a coiled-coil conformation. The short motif at 53–68 (LEPKVRKRVEVLREIQ) is the Nuclear export signal element. Positions 227–232 (KKKPKK) match the Nuclear localization signal motif. Disordered regions lie at residues 250 to 269 (FNFFSPPQVPDDDEEIDEDT) and 301 to 364 (GEAA…CKQQ). Acidic residues-rich tracts occupy residues 259 to 269 (PDDDEEIDEDT) and 304 to 340 (AQDEDFEGIMDDEDDDDEDDDDDEDEDDEGDDEDDED). Residue cysteine 361 is modified to Cysteine methyl ester. The S-farnesyl cysteine moiety is linked to residue cysteine 361. A propeptide spans 362–364 (KQQ) (removed in mature form).

The protein belongs to the nucleosome assembly protein (NAP) family.

It is found in the nucleus. The protein localises to the cytoplasm. In terms of biological role, may modulate chromatin structure by regulation of nucleosome assembly/disassembly. The protein is Nucleosome assembly protein 1;2 (NAP1;2) of Oryza sativa subsp. japonica (Rice).